A 1235-amino-acid chain; its full sequence is DNA polymerase catalytic subunit (1235 aa).

Disordered regions lie at residues 640–692 and 1098–1134; these read QGRF…TAGR and ATAP…ASKP. The segment covering 650–661 has biased composition (basic and acidic residues); the sequence is APKRPAAAREDE. Residues 662-675 are compositionally biased toward acidic residues; the sequence is ERPEEEGEDEDERE. Basic and acidic residues predominate over residues 676–691; it reads EGGGEREPEGARETAG.

Belongs to the DNA polymerase type-B family. As to quaternary structure, forms a complex with the ssDNA-binding protein UL29, the DNA polymerase processivity factor, and the alkaline exonuclease. Interacts with the putative helicase-primase complex subunit UL8; this interaction may coordinate leading and lagging strand DNA synthesis at the replication fork.

The protein localises to the host nucleus. The catalysed reaction is DNA(n) + a 2'-deoxyribonucleoside 5'-triphosphate = DNA(n+1) + diphosphate. The enzyme catalyses Endonucleolytic cleavage to 5'-phosphomonoester.. In terms of biological role, replicates viral genomic DNA. The replication complex is composed of six viral proteins: the DNA polymerase, processivity factor, primase, primase-associated factor, helicase, and ssDNA-binding protein. Additionally, the polymerase contains an intrinsic ribonuclease H (RNase H) activity that specifically degrades RNA/DNA heteroduplexes or duplex DNA substrates in the 5' to 3' direction. Therefore, it can catalyze the excision of the RNA primers that initiate the synthesis of Okazaki fragments at a replication fork during viral DNA replication. The sequence is that of DNA polymerase catalytic subunit from Human herpesvirus 1 (strain Angelotti) (HHV-1).